A 213-amino-acid polypeptide reads, in one-letter code: uncharacterized protein (213 aa).

Residues 22–42 (WFGLSMVSIAVIFGPLTGAHV) form a helical membrane-spanning segment. Positions 43-45 (NPA) match the NPA 1 motif. The next 3 helical transmembrane spans lie at 63-83 (VYII…WLLF), 112-132 (NLLS…TLNH), and 138-158 (GVAM…FGGL). Residues 164–166 (NPA) carry the NPA 2 motif. Residues 188–208 (FDYAWVPVLRPVIGAILAAWL) form a helical membrane-spanning segment.

Belongs to the MIP/aquaporin (TC 1.A.8) family.

The protein localises to the cell membrane. This is an uncharacterized protein from Haemophilus influenzae (strain ATCC 51907 / DSM 11121 / KW20 / Rd).